Here is a 443-residue protein sequence, read N- to C-terminus: ATP-dependent protease ATPase subunit HslU (443 aa).

ATP-binding positions include I18, 60–65 (GVGKTE), D256, E321, and R393.

Belongs to the ClpX chaperone family. HslU subfamily. As to quaternary structure, a double ring-shaped homohexamer of HslV is capped on each side by a ring-shaped HslU homohexamer. The assembly of the HslU/HslV complex is dependent on binding of ATP.

The protein localises to the cytoplasm. Functionally, ATPase subunit of a proteasome-like degradation complex; this subunit has chaperone activity. The binding of ATP and its subsequent hydrolysis by HslU are essential for unfolding of protein substrates subsequently hydrolyzed by HslV. HslU recognizes the N-terminal part of its protein substrates and unfolds these before they are guided to HslV for hydrolysis. This chain is ATP-dependent protease ATPase subunit HslU, found in Shigella dysenteriae serotype 1 (strain Sd197).